We begin with the raw amino-acid sequence, 72 residues long: Protein RALF-like 11 (72 aa).

Residues Met1 to Ala17 form the signal peptide. 2 cysteine pairs are disulfide-bonded: Cys34–Cys43 and Cys63–Cys69.

Belongs to the plant rapid alkalinization factor (RALF) family.

It localises to the secreted. Its function is as follows. Cell signaling peptide that may regulate plant stress, growth, and development. Mediates a rapid alkalinization of extracellular space by mediating a transient increase in the cytoplasmic Ca(2+) concentration leading to a calcium-dependent signaling events through a cell surface receptor and a concomitant activation of some intracellular mitogen-activated protein kinases. The sequence is that of Protein RALF-like 11 (RALFL11) from Arabidopsis thaliana (Mouse-ear cress).